The chain runs to 426 residues: Serine--tRNA ligase (426 aa).

231–233 (TSE) is a binding site for L-serine. 262–264 (RSE) contacts ATP. Glutamate 285 contacts L-serine. Residue 349–352 (EISS) coordinates ATP. Serine 385 lines the L-serine pocket.

It belongs to the class-II aminoacyl-tRNA synthetase family. Type-1 seryl-tRNA synthetase subfamily. In terms of assembly, homodimer. The tRNA molecule binds across the dimer.

The protein localises to the cytoplasm. It catalyses the reaction tRNA(Ser) + L-serine + ATP = L-seryl-tRNA(Ser) + AMP + diphosphate + H(+). The enzyme catalyses tRNA(Sec) + L-serine + ATP = L-seryl-tRNA(Sec) + AMP + diphosphate + H(+). Its pathway is aminoacyl-tRNA biosynthesis; selenocysteinyl-tRNA(Sec) biosynthesis; L-seryl-tRNA(Sec) from L-serine and tRNA(Sec): step 1/1. Its function is as follows. Catalyzes the attachment of serine to tRNA(Ser). Is also able to aminoacylate tRNA(Sec) with serine, to form the misacylated tRNA L-seryl-tRNA(Sec), which will be further converted into selenocysteinyl-tRNA(Sec). The chain is Serine--tRNA ligase from Legionella pneumophila (strain Corby).